The primary structure comprises 489 residues: Cytochrome P450 monooxygenase prhB (489 aa).

A run of 3 helical transmembrane segments spans residues 1-21, 212-232, and 287-307; these read MFSF…KVIY, VIFQ…MIFA, and LFIG…AYLL. Residues N347 and N379 are each glycosylated (N-linked (GlcNAc...) asparagine). C431 is a heme binding site.

It belongs to the cytochrome P450 family. Heme is required as a cofactor.

It localises to the membrane. It participates in secondary metabolite biosynthesis; terpenoid biosynthesis. In terms of biological role, cytochrome P450 monooxygenase; part of the gene cluster that mediates the biosynthesis of paraherquonin, a meroterpenoid with a unique, highly congested hexacyclic molecular architecture. The first step of the pathway is the synthesis of 3,5-dimethylorsellinic acid (DMOA) by the polyketide synthase prhL. Synthesis of DMOA is followed by farnesylation by the prenyltransferase prhE, methylesterification by the methyl-transferase prhM, epoxidation of the prenyl chain by the flavin-dependent monooxygenase prhF, and cyclization of the farnesyl moiety by the terpene cyclase prhH, to yield the tetracyclic intermediate, protoaustinoid A. The short chain dehydrogenase prhI then oxidizes the C-3 alcohol group of the terpene cyclase product to transform protoaustinoid A into protoaustinoid B. The FAD-binding monooxygenase prhJ catalyzes the oxidation of protoaustinoid B into preaustinoid A which is further oxidized into preaustinoid A1 by FAD-binding monooxygenase phrK. Finally, prhA leads to berkeleydione via the berkeleyone B intermediate. PrhA is a multifunctional dioxygenase that first desaturates at C5-C6 to form berkeleyone B, followed by rearrangement of the A/B-ring to form the cycloheptadiene moiety in berkeleydione. Berkeleydione serves as the key intermediate for the biosynthesis of paraherquonin as well as many other meroterpenoids. The cytochrome P450 monooxygenases prhB, prhD, and prhN, as well as the isomerase prhC, are probably involved in the late stage of paraherquonin biosynthesis, after the production of berkeleydione. Especially prhC might be a multifunctional enzyme that catalyzes the D-ring expansion via intramolecular methoxy rearrangement, as well as the hydrolysis of the expanded D-ring. The chain is Cytochrome P450 monooxygenase prhB from Penicillium brasilianum.